The sequence spans 232 residues: Small ribosomal subunit protein uS2 (232 aa).

The protein belongs to the universal ribosomal protein uS2 family.

This is Small ribosomal subunit protein uS2 from Carboxydothermus hydrogenoformans (strain ATCC BAA-161 / DSM 6008 / Z-2901).